Here is a 239-residue protein sequence, read N- to C-terminus: Aspartate/glutamate leucyltransferase (239 aa).

Belongs to the R-transferase family. Bpt subfamily.

It is found in the cytoplasm. It catalyses the reaction N-terminal L-glutamyl-[protein] + L-leucyl-tRNA(Leu) = N-terminal L-leucyl-L-glutamyl-[protein] + tRNA(Leu) + H(+). It carries out the reaction N-terminal L-aspartyl-[protein] + L-leucyl-tRNA(Leu) = N-terminal L-leucyl-L-aspartyl-[protein] + tRNA(Leu) + H(+). Functions in the N-end rule pathway of protein degradation where it conjugates Leu from its aminoacyl-tRNA to the N-termini of proteins containing an N-terminal aspartate or glutamate. The polypeptide is Aspartate/glutamate leucyltransferase (Campylobacter jejuni subsp. jejuni serotype O:2 (strain ATCC 700819 / NCTC 11168)).